The sequence spans 1238 residues: DNA-directed RNA polymerase subunit beta (1238 aa).

The tract at residues 1187–1238 (EGREDTPPEEVYEESYEEGFEEEIEELPEDIDFEPDSFDIENDDLDLEDFDI) is disordered. Residues 1193–1238 (PPEEVYEESYEEGFEEEIEELPEDIDFEPDSFDIENDDLDLEDFDI) are compositionally biased toward acidic residues.

It belongs to the RNA polymerase beta chain family. The RNAP catalytic core consists of 2 alpha, 1 beta, 1 beta' and 1 omega subunit. When a sigma factor is associated with the core the holoenzyme is formed, which can initiate transcription.

It catalyses the reaction RNA(n) + a ribonucleoside 5'-triphosphate = RNA(n+1) + diphosphate. DNA-dependent RNA polymerase catalyzes the transcription of DNA into RNA using the four ribonucleoside triphosphates as substrates. The polypeptide is DNA-directed RNA polymerase subunit beta (Thermoanaerobacter pseudethanolicus (strain ATCC 33223 / 39E) (Clostridium thermohydrosulfuricum)).